The sequence spans 213 residues: Neuromodulin (213 aa).

Residues 1–213 form a disordered region; that stretch reads MLCCIRRTKP…AEEAGKDQNV (213 aa). Residues cysteine 3 and cysteine 4 are each lipidated (S-palmitoyl cysteine). Residues 9–33 are compositionally biased toward basic and acidic residues; it reads KPVEKNEEADQEIKQDGTKPEENAH. In terms of domain architecture, IQ spans 32 to 61; that stretch reads AHKAATKIQASFRGHITRKKMKDEDKDGEN. The segment covering 57–73 has biased composition (acidic residues); it reads KDGENDTAPDESAETEE. Positions 74-86 are enriched in basic and acidic residues; sequence KEERVSPSEEKPV. Residues 102 to 122 are compositionally biased toward low complexity; it reads PNSPAAEAPPTAATDSAPSDT. The span at 157–169 shows a compositional bias: acidic residues; it reads EKEEEEEEEEEEE. The span at 191-213 shows a compositional bias: basic and acidic residues; that stretch reads QTDKKEALDDSKPAEEAGKDQNV.

This sequence belongs to the neuromodulin family. In terms of assembly, binds calmodulin with a greater affinity in the absence of Ca(2+) than in its presence. In terms of processing, palmitoylated. Palmitoylation is essential for plasma membrane association.

Its subcellular location is the cell membrane. The protein resides in the cell projection. It localises to the growth cone membrane. It is found in the synapse. The protein localises to the filopodium membrane. This protein is associated with nerve growth. It is a major component of the motile 'growth cones' that form the tips of elongating axons. Plays a role in axonal and dendritic filopodia induction. In Carassius auratus (Goldfish), this protein is Neuromodulin (gap43).